A 236-amino-acid polypeptide reads, in one-letter code: Ubiquitin carboxyl-terminal hydrolase YUH1 (236 aa).

A UCH catalytic domain is found at 7–233 (AVVPIESNPE…LNFAMLGLGP (227 aa)). Residues 10 to 15 (PIESNP) form an interaction with ubiquitin region. Catalysis depends on Cys-90, which acts as the Nucleophile. Residues 149–157 (FSTGQSEAP) are interaction with ubiquitin. Residue His-166 is the Proton donor of the active site. The segment at 219-228 (NEEDVLNFAM) is interaction with ubiquitin.

It belongs to the peptidase C12 family.

It catalyses the reaction Thiol-dependent hydrolysis of ester, thioester, amide, peptide and isopeptide bonds formed by the C-terminal Gly of ubiquitin (a 76-residue protein attached to proteins as an intracellular targeting signal).. Functionally, deubiquitinating enzyme (DUB) that controls levels of cellular ubiquitin through processing of ubiquitin precursors and ubiquitinated proteins. Thiol protease that recognizes and hydrolyzes a peptide bond at the C-terminal glycine of either ubiquitin or RUB1. Preferentially cleaves ubiquitin from peptides and small adducts. The protein is Ubiquitin carboxyl-terminal hydrolase YUH1 (YUH1) of Saccharomyces cerevisiae (strain ATCC 204508 / S288c) (Baker's yeast).